A 715-amino-acid chain; its full sequence is Fatty acid oxidation complex subunit alpha (715 aa).

The enoyl-CoA hydratase stretch occupies residues 1 to 190 (MTTTSAFMLN…KAGLVDDVVP (190 aa)). Residues 306 to 714 (GPLNSVGILG…FWTNGETDQG (409 aa)) are 3-hydroxyacyl-CoA dehydrogenase.

In the N-terminal section; belongs to the enoyl-CoA hydratase/isomerase family. It in the central section; belongs to the 3-hydroxyacyl-CoA dehydrogenase family. Heterotetramer of two alpha chains (FadJ) and two beta chains (FadI).

It is found in the cytoplasm. The enzyme catalyses a (3S)-3-hydroxyacyl-CoA = a (2E)-enoyl-CoA + H2O. It carries out the reaction a 4-saturated-(3S)-3-hydroxyacyl-CoA = a (3E)-enoyl-CoA + H2O. The catalysed reaction is a (3S)-3-hydroxyacyl-CoA + NAD(+) = a 3-oxoacyl-CoA + NADH + H(+). It catalyses the reaction (3S)-3-hydroxybutanoyl-CoA = (3R)-3-hydroxybutanoyl-CoA. The protein operates within lipid metabolism; fatty acid beta-oxidation. Functionally, catalyzes the formation of a hydroxyacyl-CoA by addition of water on enoyl-CoA. Also exhibits 3-hydroxyacyl-CoA epimerase and 3-hydroxyacyl-CoA dehydrogenase activities. In Salmonella typhimurium (strain LT2 / SGSC1412 / ATCC 700720), this protein is Fatty acid oxidation complex subunit alpha.